The following is a 627-amino-acid chain: MEGLAGYVYKAASEGKVLTLAALLLNRSESDIRYLLGYVSQQGGQRSTPLIIAARNGHAKVVRLLLEHYRVQTQQTGTVRFDGYVIDGATALWCAAGAGHFEVVKLLVSHGANVNHTTVTNSTPLRAACFDGRLDIVKYLVENNANISIANKYDNTCLMIAAYKGHTDVVRYLLEQRADPNAKAHCGATALHFAAEAGHIDIVKELIKWRAAIVVNGHGMTPLKVAAESCKADVVELLLSHADCDRRSRIEALELLGASFANDRENYDIMKTYHYLYLAMLERFQDGDNILEKEVLPPIHAYGNRTECRNPQELEAIRQDRDALHMEGLIVRERILGADNIDVSHPIIYRGAVYADNMEFEQCIKLWLHALHLRQKGNRNTHKDLLRFAQVFSQMIHLNEAVKAPDIECVLRCSVLEIEQSMNRVKNISDADVHSAMDNYECNLYTFLYLVCISTKTQCSEEDQCRINKQIYNLIHLDPRTREGFTLLHLAVNSNTPVDDFHTNDVCSFPNALVTKLLLDCGAEVNAVDNEGNSALHIIVQYNRPISDFLTLHSIIISLVEAGAHTDMTNKQNKTPLDKSTTGVSEILLKTQMKMSLKCLAARAVRANDINYQDQIPRTLEEFVGFH.

4 ANK repeats span residues 45 to 74 (QRST…VQTQ), 87 to 116 (DGAT…NVNH), 120 to 149 (TNST…NISI), and 153 to 182 (YDNT…DPNA). 3 residues coordinate Zn(2+): His185, Cys186, and His218. ANK repeat units lie at residues 186–215 (CGAT…AIVV) and 218–248 (HGMT…DRRS). Residues 344-377 (SHPIIYRGAVYADNMEFEQCIKLWLHALHLRQKG) form a TPR repeat. ANK repeat units follow at residues 483–527 (EGFT…EVNA) and 531–568 (EGNS…HTDM).

Belongs to the fem-1 family. As to quaternary structure, component of a CRL2 E3 ubiquitin-protein ligase complex, also named ECS (Elongin BC-CUL2/5-SOCS-box protein) complex, composed of CUL2, Elongin BC (ELOB and ELOC), RBX1 and substrate-specific adapter FEM1B. Homooligomer. Interacts with PPM1F and PHTF1. Interacts with the death domain of FAS/TNFRSF6 and TNFRSF1A. Interacts with CHEK1. Interacts with NKX3-1. As to expression, present in adult testis (at protein level).

The protein resides in the cytoplasm. It is found in the nucleus. The protein operates within protein modification; protein ubiquitination. With respect to regulation, activity of the CRL2(FEM1B) complex toward FNIP1 is inhibited by BEX family proteins (BEX1, BEX2, BEX3 and/or BEX4) in absence of reductive stress. Mechanistically, BEX proteins act as pseudosubstrate inhibitors that associate with FEM1B via zinc in absence of reductive stress, thereby preventing association between FEM1B and FNIP1. In terms of biological role, substrate-recognition component of a Cul2-RING (CRL2) E3 ubiquitin-protein ligase complex of the DesCEND (destruction via C-end degrons) pathway, which recognizes a C-degron located at the extreme C terminus of target proteins, leading to their ubiquitination and degradation. The C-degron recognized by the DesCEND pathway is usually a motif of less than ten residues and can be present in full-length proteins, truncated proteins or proteolytically cleaved forms. The CRL2(FEM1B) complex specifically recognizes proteins ending with -Gly-Leu-Asp-Arg, such as CDK5R1, leading to their ubiquitination and degradation. Also acts as a regulator of the reductive stress response by mediating ubiquitination of reduced FNIP1: in response to reductive stress, the CRL2(FEM1B) complex specifically recognizes a conserved Cys degron in FNIP1 when this degron is reduced, leading to FNIP1 degradation and subsequent activation of mitochondria to recalibrate reactive oxygen species (ROS). Mechanistically, recognizes and binds reduced FNIP1 through two interface zinc ions, which act as a molecular glue that recruit reduced FNIP1 to FEM1B. Promotes ubiquitination of GLI1, suppressing GLI1 transcriptional activator activity. Promotes ubiquitination and degradation of ANKRD37. Promotes ubiquitination and degradation of SLBP. Involved in apoptosis by acting as a death receptor-associated protein that mediates apoptosis. Also involved in glucose homeostasis in pancreatic islet. May also act as an adapter/mediator in replication stress-induced signaling that leads to the activation of CHEK1. The polypeptide is Protein fem-1 homolog B (Rattus norvegicus (Rat)).